The primary structure comprises 322 residues: 1-aminocyclopropane-1-carboxylate oxidase 1 (322 aa).

Residues 159 to 259 form the Fe2OG dioxygenase domain; that stretch reads PTFGTKVSSY…RMSIASFYNP (101 aa). Positions 183, 185, and 240 each coordinate Fe cation.

It belongs to the iron/ascorbate-dependent oxidoreductase family. The cofactor is Fe cation.

It carries out the reaction 1-aminocyclopropane-1-carboxylate + L-ascorbate + O2 = ethene + L-dehydroascorbate + hydrogen cyanide + CO2 + 2 H2O. It functions in the pathway alkene biosynthesis; ethylene biosynthesis via S-adenosyl-L-methionine; ethylene from S-adenosyl-L-methionine: step 2/2. The sequence is that of 1-aminocyclopropane-1-carboxylate oxidase 1 (ACO1) from Oryza sativa subsp. japonica (Rice).